A 279-amino-acid polypeptide reads, in one-letter code: 5'-nucleotidase SurE 1 (279 aa).

A divalent metal cation is bound by residues Asp-12, Asp-13, Ser-45, and Asn-103.

Belongs to the SurE nucleotidase family. A divalent metal cation serves as cofactor.

Its subcellular location is the cytoplasm. The enzyme catalyses a ribonucleoside 5'-phosphate + H2O = a ribonucleoside + phosphate. Its function is as follows. Nucleotidase that shows phosphatase activity on nucleoside 5'-monophosphates. The protein is 5'-nucleotidase SurE 1 of Chlamydia caviae (strain ATCC VR-813 / DSM 19441 / 03DC25 / GPIC) (Chlamydophila caviae).